We begin with the raw amino-acid sequence, 72 residues long: Translation initiation factor IF-1 (72 aa).

In terms of domain architecture, S1-like spans 1–72; sequence MAKEDVIEVE…NRGRIVYRYK (72 aa).

Belongs to the IF-1 family. Component of the 30S ribosomal translation pre-initiation complex which assembles on the 30S ribosome in the order IF-2 and IF-3, IF-1 and N-formylmethionyl-tRNA(fMet); mRNA recruitment can occur at any time during PIC assembly.

It is found in the cytoplasm. Functionally, one of the essential components for the initiation of protein synthesis. Stabilizes the binding of IF-2 and IF-3 on the 30S subunit to which N-formylmethionyl-tRNA(fMet) subsequently binds. Helps modulate mRNA selection, yielding the 30S pre-initiation complex (PIC). Upon addition of the 50S ribosomal subunit IF-1, IF-2 and IF-3 are released leaving the mature 70S translation initiation complex. The polypeptide is Translation initiation factor IF-1 (Moorella thermoacetica (strain ATCC 39073 / JCM 9320)).